A 178-amino-acid chain; its full sequence is ATP synthase subunit delta (178 aa).

Belongs to the ATPase delta chain family. As to quaternary structure, F-type ATPases have 2 components, F(1) - the catalytic core - and F(0) - the membrane proton channel. F(1) has five subunits: alpha(3), beta(3), gamma(1), delta(1), epsilon(1). F(0) has three main subunits: a(1), b(2) and c(10-14). The alpha and beta chains form an alternating ring which encloses part of the gamma chain. F(1) is attached to F(0) by a central stalk formed by the gamma and epsilon chains, while a peripheral stalk is formed by the delta and b chains.

The protein resides in the cell membrane. In terms of biological role, f(1)F(0) ATP synthase produces ATP from ADP in the presence of a proton or sodium gradient. F-type ATPases consist of two structural domains, F(1) containing the extramembraneous catalytic core and F(0) containing the membrane proton channel, linked together by a central stalk and a peripheral stalk. During catalysis, ATP synthesis in the catalytic domain of F(1) is coupled via a rotary mechanism of the central stalk subunits to proton translocation. This protein is part of the stalk that links CF(0) to CF(1). It either transmits conformational changes from CF(0) to CF(1) or is implicated in proton conduction. In Streptococcus pneumoniae (strain CGSP14), this protein is ATP synthase subunit delta.